The sequence spans 283 residues: 4-diphosphocytidyl-2-C-methyl-D-erythritol kinase (283 aa).

Lys10 is an active-site residue. Pro99–Ser109 contacts ATP. Asp141 is an active-site residue.

Belongs to the GHMP kinase family. IspE subfamily. Homodimer.

The enzyme catalyses 4-CDP-2-C-methyl-D-erythritol + ATP = 4-CDP-2-C-methyl-D-erythritol 2-phosphate + ADP + H(+). Its pathway is isoprenoid biosynthesis; isopentenyl diphosphate biosynthesis via DXP pathway; isopentenyl diphosphate from 1-deoxy-D-xylulose 5-phosphate: step 3/6. Catalyzes the phosphorylation of the position 2 hydroxy group of 4-diphosphocytidyl-2C-methyl-D-erythritol. The polypeptide is 4-diphosphocytidyl-2-C-methyl-D-erythritol kinase (Salmonella typhi).